The primary structure comprises 250 residues: 3-deoxy-manno-octulosonate cytidylyltransferase (250 aa).

Belongs to the KdsB family.

The protein localises to the cytoplasm. The catalysed reaction is 3-deoxy-alpha-D-manno-oct-2-ulosonate + CTP = CMP-3-deoxy-beta-D-manno-octulosonate + diphosphate. It functions in the pathway nucleotide-sugar biosynthesis; CMP-3-deoxy-D-manno-octulosonate biosynthesis; CMP-3-deoxy-D-manno-octulosonate from 3-deoxy-D-manno-octulosonate and CTP: step 1/1. Its pathway is bacterial outer membrane biogenesis; lipopolysaccharide biosynthesis. Its function is as follows. Activates KDO (a required 8-carbon sugar) for incorporation into bacterial lipopolysaccharide in Gram-negative bacteria. The polypeptide is 3-deoxy-manno-octulosonate cytidylyltransferase (Actinobacillus pleuropneumoniae serotype 7 (strain AP76)).